A 223-amino-acid polypeptide reads, in one-letter code: Deoxyribose-phosphate aldolase (223 aa).

The active-site Proton donor/acceptor is the Asp-89. Catalysis depends on Lys-152, which acts as the Schiff-base intermediate with acetaldehyde. The Proton donor/acceptor role is filled by Lys-181.

Belongs to the DeoC/FbaB aldolase family. DeoC type 1 subfamily.

The protein resides in the cytoplasm. The catalysed reaction is 2-deoxy-D-ribose 5-phosphate = D-glyceraldehyde 3-phosphate + acetaldehyde. It functions in the pathway carbohydrate degradation; 2-deoxy-D-ribose 1-phosphate degradation; D-glyceraldehyde 3-phosphate and acetaldehyde from 2-deoxy-alpha-D-ribose 1-phosphate: step 2/2. Functionally, catalyzes a reversible aldol reaction between acetaldehyde and D-glyceraldehyde 3-phosphate to generate 2-deoxy-D-ribose 5-phosphate. The protein is Deoxyribose-phosphate aldolase of Bacillus cereus (strain ATCC 14579 / DSM 31 / CCUG 7414 / JCM 2152 / NBRC 15305 / NCIMB 9373 / NCTC 2599 / NRRL B-3711).